The chain runs to 85 residues: Large ribosomal subunit protein bL27 (85 aa).

Residues 1-21 (MAHKKAAGSTKNGRDSNAKRL) are disordered.

It belongs to the bacterial ribosomal protein bL27 family.

The polypeptide is Large ribosomal subunit protein bL27 (Hydrogenovibrio crunogenus (strain DSM 25203 / XCL-2) (Thiomicrospira crunogena)).